Here is a 393-residue protein sequence, read N- to C-terminus: Formate-dependent phosphoribosylglycinamide formyltransferase (393 aa).

Residues 22-23 and glutamate 82 contribute to the N(1)-(5-phospho-beta-D-ribosyl)glycinamide site; that span reads EL. ATP is bound by residues arginine 114, lysine 155, 160-165, 195-198, and glutamate 203; these read SSGKGQ and ESFV. The 190-residue stretch at 119–308 folds into the ATP-grasp domain; the sequence is RLAAEELGLR…EFALHVRAVL (190 aa). 2 residues coordinate Mg(2+): glutamate 267 and glutamate 279. Residues aspartate 286, lysine 356, and 363 to 364 each bind N(1)-(5-phospho-beta-D-ribosyl)glycinamide; that span reads RR.

This sequence belongs to the PurK/PurT family. As to quaternary structure, homodimer.

The catalysed reaction is N(1)-(5-phospho-beta-D-ribosyl)glycinamide + formate + ATP = N(2)-formyl-N(1)-(5-phospho-beta-D-ribosyl)glycinamide + ADP + phosphate + H(+). It functions in the pathway purine metabolism; IMP biosynthesis via de novo pathway; N(2)-formyl-N(1)-(5-phospho-D-ribosyl)glycinamide from N(1)-(5-phospho-D-ribosyl)glycinamide (formate route): step 1/1. In terms of biological role, involved in the de novo purine biosynthesis. Catalyzes the transfer of formate to 5-phospho-ribosyl-glycinamide (GAR), producing 5-phospho-ribosyl-N-formylglycinamide (FGAR). Formate is provided by PurU via hydrolysis of 10-formyl-tetrahydrofolate. The sequence is that of Formate-dependent phosphoribosylglycinamide formyltransferase from Oleidesulfovibrio alaskensis (strain ATCC BAA-1058 / DSM 17464 / G20) (Desulfovibrio alaskensis).